We begin with the raw amino-acid sequence, 240 residues long: 1-(5-phosphoribosyl)-5-[(5-phosphoribosylamino)methylideneamino] imidazole-4-carboxamide isomerase (240 aa).

The Proton acceptor role is filled by Asp-8. Catalysis depends on Asp-129, which acts as the Proton donor.

The protein belongs to the HisA/HisF family.

Its subcellular location is the cytoplasm. The enzyme catalyses 1-(5-phospho-beta-D-ribosyl)-5-[(5-phospho-beta-D-ribosylamino)methylideneamino]imidazole-4-carboxamide = 5-[(5-phospho-1-deoxy-D-ribulos-1-ylimino)methylamino]-1-(5-phospho-beta-D-ribosyl)imidazole-4-carboxamide. The protein operates within amino-acid biosynthesis; L-histidine biosynthesis; L-histidine from 5-phospho-alpha-D-ribose 1-diphosphate: step 4/9. The sequence is that of 1-(5-phosphoribosyl)-5-[(5-phosphoribosylamino)methylideneamino] imidazole-4-carboxamide isomerase from Dinoroseobacter shibae (strain DSM 16493 / NCIMB 14021 / DFL 12).